A 158-amino-acid polypeptide reads, in one-letter code: S-ribosylhomocysteine lyase (158 aa).

Residues histidine 54, histidine 58, and cysteine 124 each contribute to the Fe cation site.

The protein belongs to the LuxS family. Homodimer. Fe cation serves as cofactor.

It carries out the reaction S-(5-deoxy-D-ribos-5-yl)-L-homocysteine = (S)-4,5-dihydroxypentane-2,3-dione + L-homocysteine. Involved in the synthesis of autoinducer 2 (AI-2) which is secreted by bacteria and is used to communicate both the cell density and the metabolic potential of the environment. The regulation of gene expression in response to changes in cell density is called quorum sensing. Catalyzes the transformation of S-ribosylhomocysteine (RHC) to homocysteine (HC) and 4,5-dihydroxy-2,3-pentadione (DPD). The sequence is that of S-ribosylhomocysteine lyase from Lactobacillus gasseri (strain ATCC 33323 / DSM 20243 / BCRC 14619 / CIP 102991 / JCM 1131 / KCTC 3163 / NCIMB 11718 / NCTC 13722 / AM63).